Reading from the N-terminus, the 325-residue chain is GMP reductase (325 aa).

C174 (thioimidate intermediate) is an active-site residue. 203–226 is an NADP(+) binding site; the sequence is LIADGGIRTHGDIAKSIRFGASMV.

Belongs to the IMPDH/GMPR family. GuaC type 2 subfamily.

The enzyme catalyses IMP + NH4(+) + NADP(+) = GMP + NADPH + 2 H(+). Its function is as follows. Catalyzes the irreversible NADPH-dependent deamination of GMP to IMP. It functions in the conversion of nucleobase, nucleoside and nucleotide derivatives of G to A nucleotides, and in maintaining the intracellular balance of A and G nucleotides. The sequence is that of GMP reductase from Staphylococcus aureus (strain bovine RF122 / ET3-1).